Consider the following 283-residue polypeptide: Aspartate dehydrogenase domain-containing protein (283 aa).

Residues serine 20 and serine 168 each carry the phosphoserine modification.

Belongs to the L-aspartate dehydrogenase family.

The polypeptide is Aspartate dehydrogenase domain-containing protein (Homo sapiens (Human)).